The chain runs to 204 residues: 3-isopropylmalate dehydratase small subunit (204 aa).

The protein belongs to the LeuD family. LeuD type 1 subfamily. As to quaternary structure, heterodimer of LeuC and LeuD.

The enzyme catalyses (2R,3S)-3-isopropylmalate = (2S)-2-isopropylmalate. It participates in amino-acid biosynthesis; L-leucine biosynthesis; L-leucine from 3-methyl-2-oxobutanoate: step 2/4. In terms of biological role, catalyzes the isomerization between 2-isopropylmalate and 3-isopropylmalate, via the formation of 2-isopropylmaleate. The chain is 3-isopropylmalate dehydratase small subunit from Chloroflexus aggregans (strain MD-66 / DSM 9485).